A 393-amino-acid polypeptide reads, in one-letter code: 2-methylcitrate synthase (393 aa).

Residues arginine 92 and histidine 207 each contribute to the substrate site. The active site involves histidine 242. 275–279 (KIMGF) is a CoA binding site. Histidine 281 is an active-site residue. Residue arginine 290 participates in substrate binding. Aspartate 332 is an active-site residue. Positions 357 and 376 each coordinate substrate.

Belongs to the citrate synthase family. In terms of assembly, homodimer.

It catalyses the reaction propanoyl-CoA + oxaloacetate + H2O = (2S,3S)-2-methylcitrate + CoA + H(+). It carries out the reaction oxaloacetate + acetyl-CoA + H2O = citrate + CoA + H(+). It participates in organic acid metabolism; propanoate degradation. It functions in the pathway carbohydrate metabolism; tricarboxylic acid cycle; isocitrate from oxaloacetate: step 1/2. Involved in the catabolism of short chain fatty acids (SCFA) via the tricarboxylic acid (TCA)(acetyl degradation route) and via the 2-methylcitrate cycle I (propionate degradation route). Catalyzes the Claisen condensation of propionyl-CoA and oxaloacetate (OAA) to yield 2-methylcitrate (2-MC) and CoA. Also catalyzes the condensation of oxaloacetate with acetyl-CoA. This Mycobacterium tuberculosis (strain ATCC 35801 / TMC 107 / Erdman) protein is 2-methylcitrate synthase (gltA1).